A 194-amino-acid polypeptide reads, in one-letter code: Peptidyl-tRNA hydrolase (194 aa).

Tyr-17 contacts tRNA. Catalysis depends on His-22, which acts as the Proton acceptor. Tyr-69, Asn-71, and Asn-117 together coordinate tRNA.

The protein belongs to the PTH family. In terms of assembly, monomer.

Its subcellular location is the cytoplasm. It catalyses the reaction an N-acyl-L-alpha-aminoacyl-tRNA + H2O = an N-acyl-L-amino acid + a tRNA + H(+). In terms of biological role, hydrolyzes ribosome-free peptidyl-tRNAs (with 1 or more amino acids incorporated), which drop off the ribosome during protein synthesis, or as a result of ribosome stalling. Catalyzes the release of premature peptidyl moieties from peptidyl-tRNA molecules trapped in stalled 50S ribosomal subunits, and thus maintains levels of free tRNAs and 50S ribosomes. This is Peptidyl-tRNA hydrolase from Arthrobacter sp. (strain FB24).